Reading from the N-terminus, the 277-residue chain is Putative ankyrin repeat protein L81 (277 aa).

ANK repeat units follow at residues 150 to 179 (FGQT…DLHQ) and 183 to 215 (QGRS…DLYQ).

The protein is Putative ankyrin repeat protein L81 of Acanthamoeba polyphaga (Amoeba).